Here is a 117-residue protein sequence, read N- to C-terminus: Eukaryotic translation initiation factor 4E-binding protein 1 (117 aa).

2 stretches are compositionally biased toward polar residues: residues 1 to 12 (MSAGSSCSQTPS) and 33 to 47 (YSTT…TTPG). The segment at 1–47 (MSAGSSCSQTPSRAIPTRRVALGDGVQLPPGDYSTTPGGTLFSTTPG) is disordered. The residue at position 2 (serine 2) is an N-acetylserine. A phosphothreonine mark is found at threonine 36 and threonine 40. Serine 43 carries the phosphoserine modification. At threonine 45 the chain carries Phosphothreonine; by MTOR. Threonine 49 bears the Phosphothreonine mark. Tyrosine 53 carries the phosphotyrosine modification. Residues 53–59 (YDRKFLM) carry the YXXXXLphi motif motif. Lysine 56 is covalently cross-linked (Glycyl lysine isopeptide (Lys-Gly) (interchain with G-Cter in ubiquitin)). Serine 64 carries the phosphoserine; by DYRK2, MAPK1, MAPK3 and MTOR modification. Positions 64-117 (SPVAKTPPKDLPTIPGVTSPTSDEPPMQASQSHLHSSPEDKRAGGEESQFEMDI) are disordered. Threonine 69 carries the post-translational modification Phosphothreonine; by MTOR. A Phosphothreonine modification is found at threonine 76. The span at 79–98 (GVTSPTSDEPPMQASQSHLH) shows a compositional bias: polar residues. Residues serine 82, serine 95, and serine 99 each carry the phosphoserine modification. Residues 99–108 (SSPEDKRAGG) show a composition bias toward basic and acidic residues. Serine 100 carries the phosphoserine; by DYRK2 modification. At serine 111 the chain carries Phosphoserine. The TOS motif signature appears at 113–117 (FEMDI).

Belongs to the eIF4E-binding protein family. Hypophosphorylated EIF4EBP1 competes with EIF4G1/EIF4G3 to interact with EIF4E; insulin stimulated MAP-kinase (MAPK1 and MAPK3) or mTORC1 phosphorylation of EIF4EBP1 causes dissociation of the complex allowing EIF4G1/EIF4G3 to bind and consequent initiation of translation. Interacts (via TOS motif) with RPTOR; promoting phosphorylation by mTORC1. In terms of processing, phosphorylated on serine and threonine residues in response to insulin, EGF and PDGF. Phosphorylation at Thr-36, Thr-45, Ser-64 and Thr-69, corresponding to the hyperphosphorylated form, is regulated by mTORC1 and abolishes binding to EIF4E. Ubiquitinated: when eIF4E levels are low, hypophosphorylated form is ubiquitinated by the BCR(KLHL25) complex, leading to its degradation and serving as a homeostatic mechanism to maintain translation and prevent eIF4E inhibition when eIF4E levels are low. Not ubiquitinated when hyperphosphorylated (at Thr-36, Thr-45, Ser-64 and Thr-69) or associated with eIF4E. Expressed in all tissues examined; highest levels in fat and skeletal tissue, lowest levels in kidney.

The protein resides in the cytoplasm. It is found in the nucleus. In terms of biological role, repressor of translation initiation that regulates EIF4E activity by preventing its assembly into the eIF4F complex: hypophosphorylated form competes with EIF4G1/EIF4G3 and strongly binds to EIF4E, leading to repress translation. In contrast, hyperphosphorylated form dissociates from EIF4E, allowing interaction between EIF4G1/EIF4G3 and EIF4E, leading to initiation of translation. Mediates the regulation of protein translation by hormones, growth factors and other stimuli that signal through the MAP kinase and mTORC1 pathways. The protein is Eukaryotic translation initiation factor 4E-binding protein 1 (Eif4ebp1) of Rattus norvegicus (Rat).